The chain runs to 75 residues: Metallothionein-like protein 1 (75 aa).

The protein belongs to the metallothionein superfamily. Type 15 family.

In terms of biological role, metallothioneins have a high content of cysteine residues that bind various heavy metals. In Trifolium repens (Creeping white clover), this protein is Metallothionein-like protein 1 (MT1B).